The primary structure comprises 68 residues: Large ribosomal subunit protein bL31 (68 aa).

Zn(2+)-binding residues include Cys17, Cys19, Cys37, and Cys40.

This sequence belongs to the bacterial ribosomal protein bL31 family. Type A subfamily. Part of the 50S ribosomal subunit. Zn(2+) serves as cofactor.

In terms of biological role, binds the 23S rRNA. The polypeptide is Large ribosomal subunit protein bL31 (Clostridium perfringens (strain ATCC 13124 / DSM 756 / JCM 1290 / NCIMB 6125 / NCTC 8237 / Type A)).